The following is a 436-amino-acid chain: MSVSARSAAAEERSVNCSTMAQPKNLEGYVGFANLPNQVYRKSVKRGFEFTLMVVGESGLGKSTLINSLFLTDLYSPEYPGPSHRIKKTVQVEQSKVLIKEGGVQLLLTIVDTPGFGDAVDNSNCWQPVIDYIDSKFEDYLNAESRVNRRQMPDNRVQCCLYFIAPSGHGLKPLDIEFMKRLHEKVNIIPLIAKADTLTPEECQQFKKQIMKEIQGHKIKIYEFPETDDEEENKLVKKIKDRLPLAVVGSNTIIEVNGKRVRGRQYPWGVAEVENGEHCDFTILRNMLIRTHMQDLKDVTNNVHYENYRSRKLAAVTYNGVDNNKNKGQLTKSPLAQMEEERREHVAKMKKMEMEMEQVFEMKVKEKVQKLKDSEAELQRRHEQMKKNLEAQHKELEEKRRQFEEEKANWEAQQRILEQQNSSRTLEKNKKKGKIF.

At Ser2 the chain carries N-acetylserine. Tyr29 is subject to Phosphotyrosine. The region spanning 46 to 315 is the Septin-type G domain; it reads RGFEFTLMVV…ENYRSRKLAA (270 aa). The segment at 46–316 is interaction with SEPTIN12; sequence RGFEFTLMVV…NYRSRKLAAV (271 aa). Positions 56–63 are G1 motif; it reads GESGLGKS. 56–63 is a binding site for GTP; sequence GESGLGKS. Residue Ser76 is modified to Phosphoserine. Residues Thr89, Gly115, and 194 to 202 each bind GTP; that span reads KADTLTPEE. Positions 112 to 115 are G3 motif; sequence DTPG. Residues 193-196 are G4 motif; the sequence is AKAD. Phosphothreonine is present on Thr227. Residues Gly249 and Arg264 each contribute to the GTP site. A coiled-coil region spans residues 331–436; sequence TKSPLAQMEE…EKNKKKGKIF (106 aa). At Ser333 the chain carries Phosphoserine. Lys372 bears the N6-acetyllysine mark. Over residues 377–409 the composition is skewed to basic and acidic residues; it reads ELQRRHEQMKKNLEAQHKELEEKRRQFEEEKAN. Residues 377–436 form a disordered region; that stretch reads ELQRRHEQMKKNLEAQHKELEEKRRQFEEEKANWEAQQRILEQQNSSRTLEKNKKKGKIF. Ser423 bears the Phosphoserine mark. Thr425 carries the phosphothreonine modification.

The protein belongs to the TRAFAC class TrmE-Era-EngA-EngB-Septin-like GTPase superfamily. Septin GTPase family. As to quaternary structure, septins polymerize into heterooligomeric protein complexes that form filaments, and associate with cellular membranes, actin filaments and microtubules. GTPase activity is required for filament formation. Filaments are assembled from asymmetrical heterotrimers, composed of SEPTIN2, SEPTIN6 and SEPTIN7 that associate head-to-head to form a hexameric unit. Within the trimer, directly interacts with SEPTIN6, while interaction with SEPTIN2 seems indirect. In the absence of SEPTIN6, forms homodimers. Interacts directly with CENPE and links CENPE to septin filaments composed of SEPTIN2, SEPTIN6 and SEPTIN7. Interacts with SEPTIN5. Component of a septin core octameric complex consisting of SEPTIN12, SEPTIN7, SEPTIN6 and SEPTIN2 or SEPTIN4 in the order 12-7-6-2-2-6-7-12 or 12-7-6-4-4-6-7-12 and located in the sperm annulus; the SEPTIN12:SEPTIN7 association is mediated by the respective GTP-binding domains. Interacts with SEPTIN2, SEPTIN7, SEPTIN8, SEPTIN9 and SEPTIN11.

The protein localises to the cytoplasm. It localises to the chromosome. It is found in the centromere. Its subcellular location is the kinetochore. The protein resides in the cytoskeleton. The protein localises to the spindle. It localises to the cleavage furrow. It is found in the midbody. Its subcellular location is the cilium axoneme. The protein resides in the cell projection. The protein localises to the cilium. It localises to the flagellum. Its function is as follows. Filament-forming cytoskeletal GTPase. Required for normal organization of the actin cytoskeleton. Required for normal progress through mitosis. Involved in cytokinesis. Required for normal association of CENPE with the kinetochore. Plays a role in ciliogenesis and collective cell movements. Forms a filamentous structure with SEPTIN12, SEPTIN6, SEPTIN2 and probably SEPTIN4 at the sperm annulus which is required for the structural integrity and motility of the sperm tail during postmeiotic differentiation. The chain is Septin-7 from Rattus norvegicus (Rat).